The sequence spans 509 residues: DAP3-binding cell death enhancer 1 (509 aa).

The N-terminal 23 residues, 1 to 23 (MWRLTGILGRALPRLLGPGFRGI), are a transit peptide targeting the mitochondrion. Disordered regions lie at residues 19–60 (GFRG…RNRD) and 143–185 (VLPS…PGLL). Residues 24–101 (TPKPTSSDGP…AVLALHLARQ (78 aa)) constitute a propeptide, extended MTS. Polar residues predominate over residues 26–40 (KPTSSDGPQTTSTTL). Composition is skewed to basic and acidic residues over residues 46–60 (NFDRSGSHGSKRNRD) and 156–168 (GLREPRLGQEEPA). TPR repeat units lie at residues 213 to 245 (AGPPGGKNEQDKPKALPLEEAVTSIQQLFQLSV), 246 to 278 (AIAFNFLGTENIKTGDYTAAFSYFQKAADRGYS), 279 to 313 (KAQYNVGLCLEHGRGTPRDLSKAVLFYHLAAVQGH), 314 to 351 (SLAQYRYARCLLQSPGSMSDPERQRAVSLLKQAADSGL), 352 to 385 (TEAQAFLGVLFTKEPHLDEQKAVKYFWLAASNGD), 386 to 423 (SQSRFHLGICYEKGLGVQRNLGEAVKCYQKSAAMGNEP), and 470 to 498 (ASSTGNLGLLCRSGHLGTSHGAPSRAMPS). The SIFI-degron signature appears at 307-326 (LAAVQGHSLAQYRYARCLLQ).

Belongs to the DELE1 family. As to quaternary structure, interacts with DAP3. In terms of assembly, interacts (via TPR repeats) with EIF2AK1/HRI; activating the protein kinase activity of EIF2AK1/HRI, thereby promoting the integrated stress response (ISR). Homooctamer; oligomerization is required to activate EIF2AK1/HRI. Interacts (via TPR repeats) with EIF2AK1/HRI; activating the protein kinase activity of EIF2AK1/HRI, thereby promoting the integrated stress response (ISR). In terms of processing, unstable protein in absence of stress: imported in the mitochondrial matrix following processing by the mitochondrial-processing peptidase (MPP), where it is degraded by LONP1. Stabilized in response to iron deficiency: iron deficiency impairs mitochondrial import, promoting localization at the mitochondrial surface and stabilization. Cleaved by OMA1 in response to mitochondrial stress, generating the DAP3-binding cell death enhancer 1 short form (DELE1(S) or S-DELE1) that accumulates in the cytosol and activates the protein kinase activity of EIF2AK1/HRI. Protein cleavage by OMA1 can take place at different positions, and apparently does not require a specific sequence motif. Ubiquitinated and degraded by the SIFI complex once the mitochondrial stress has been resolved, thereby providing stress response silencing. Within the SIFI complex, UBR4 initiates ubiquitin chain that are further elongated or branched by KCMF1.

It localises to the mitochondrion. Its subcellular location is the mitochondrion outer membrane. The protein localises to the mitochondrion inner membrane. It is found in the cytoplasm. The protein resides in the cytosol. Protein kinase activator that acts as a key activator of the integrated stress response (ISR) following various stresses, such as iron deficiency, mitochondrial stress or mitochondrial DNA breaks. Detects impaired protein import and processing in mitochondria, activating the ISR. May also required for the induction of death receptor-mediated apoptosis through the regulation of caspase activation. In terms of biological role, protein kinase activator that activates the ISR in response to iron deficiency: iron deficiency impairs mitochondrial import, promoting DELE1 localization at the mitochondrial surface, where it binds and activates EIF2AK1/HRI to trigger the ISR. Functionally, protein kinase activator generated by protein cleavage in response to mitochondrial stress, which accumulates in the cytosol and specifically binds to and activates the protein kinase activity of EIF2AK1/HRI. It thereby activates the integrated stress response (ISR): EIF2AK1/HRI activation promotes eIF-2-alpha (EIF2S1) phosphorylation, leading to a decrease in global protein synthesis and the induction of selected genes, including the transcription factor ATF4, the master transcriptional regulator of the ISR. Also acts as an activator of PRKN-independent mitophagy: activates the protein kinase activity of EIF2AK1/HRI in response to mitochondrial damage, promoting eIF-2-alpha (EIF2S1) phosphorylation, leading to mitochondrial localization of EIF2S1 followed by induction of mitophagy. In Rattus norvegicus (Rat), this protein is DAP3-binding cell death enhancer 1.